The sequence spans 314 residues: tRNA-cytidine(32) 2-sulfurtransferase (314 aa).

The PP-loop motif signature appears at 49–54 (SGGKDS). [4Fe-4S] cluster is bound by residues Cys124, Cys127, and Cys215.

The protein belongs to the TtcA family. In terms of assembly, homodimer. It depends on Mg(2+) as a cofactor. [4Fe-4S] cluster is required as a cofactor.

It is found in the cytoplasm. It catalyses the reaction cytidine(32) in tRNA + S-sulfanyl-L-cysteinyl-[cysteine desulfurase] + AH2 + ATP = 2-thiocytidine(32) in tRNA + L-cysteinyl-[cysteine desulfurase] + A + AMP + diphosphate + H(+). The protein operates within tRNA modification. Catalyzes the ATP-dependent 2-thiolation of cytidine in position 32 of tRNA, to form 2-thiocytidine (s(2)C32). The sulfur atoms are provided by the cysteine/cysteine desulfurase (IscS) system. This is tRNA-cytidine(32) 2-sulfurtransferase from Pasteurella multocida (strain Pm70).